The following is a 359-amino-acid chain: MCKKNILSNIKKKKINLLNFNLKKMINFFIKIGEKKFRAIQITDWIYKKQNIKFDQMSNLNFFLKKKLNNIAVIKIPKCIKKIKSIDGTIKWKFLCNKEFIETIYIPEKKRATLCISSQVGCQLKCNFCATGQLGYKRNLLVSEIIGQIWYVINKIKKYNSKKKNFPPIKNIVMMGMGEPLLNLKNIIIAIDIILGNYGFNFSKNKVTLSTSGIVPAINKIAGKIDISLAVSLHASNNTIRNKIMPINKIYNIQLLLESIKNYLKKSSANKGIVTIEYVMLSKINDFQHHAIELSNLLKNIPCKINLIPWNPIKNSSYICSSSKNIINFANFLRKKGFIVIIRKNRGSDIQAACGQLIA.

The active-site Proton acceptor is E102. A Radical SAM core domain is found at 108-351; it reads EKKRATLCIS…IRKNRGSDIQ (244 aa). C115 and C354 are joined by a disulfide. 3 residues coordinate [4Fe-4S] cluster: C122, C126, and C129. Residues 178–179, S210, 232–234, and N311 each bind S-adenosyl-L-methionine; these read GE and SLH. C354 serves as the catalytic S-methylcysteine intermediate.

It belongs to the radical SAM superfamily. RlmN family. [4Fe-4S] cluster serves as cofactor.

It localises to the cytoplasm. It carries out the reaction adenosine(2503) in 23S rRNA + 2 reduced [2Fe-2S]-[ferredoxin] + 2 S-adenosyl-L-methionine = 2-methyladenosine(2503) in 23S rRNA + 5'-deoxyadenosine + L-methionine + 2 oxidized [2Fe-2S]-[ferredoxin] + S-adenosyl-L-homocysteine. It catalyses the reaction adenosine(37) in tRNA + 2 reduced [2Fe-2S]-[ferredoxin] + 2 S-adenosyl-L-methionine = 2-methyladenosine(37) in tRNA + 5'-deoxyadenosine + L-methionine + 2 oxidized [2Fe-2S]-[ferredoxin] + S-adenosyl-L-homocysteine. Functionally, specifically methylates position 2 of adenine 2503 in 23S rRNA and position 2 of adenine 37 in tRNAs. m2A2503 modification seems to play a crucial role in the proofreading step occurring at the peptidyl transferase center and thus would serve to optimize ribosomal fidelity. The protein is Dual-specificity RNA methyltransferase RlmN of Buchnera aphidicola subsp. Cinara cedri (strain Cc).